We begin with the raw amino-acid sequence, 442 residues long: D-serine dehydratase 1 (442 aa).

At K118 the chain carries N6-(pyridoxal phosphate)lysine.

This sequence belongs to the serine/threonine dehydratase family. DsdA subfamily. Monomer. Requires pyridoxal 5'-phosphate as cofactor.

The catalysed reaction is D-serine = pyruvate + NH4(+). The polypeptide is D-serine dehydratase 1 (Escherichia coli (strain UTI89 / UPEC)).